The primary structure comprises 238 residues: Flagellar L-ring protein (238 aa).

An N-terminal signal peptide occupies residues 1–17; the sequence is MKRRLLAAGCAMLLLSG. Cys18 carries the N-palmitoyl cysteine lipid modification. Residue Cys18 is the site of S-diacylglycerol cysteine attachment. The interval 22–50 is disordered; that stretch reads RQQPSPVPPVTQPQAYAEPEDTAANPGSL.

Belongs to the FlgH family. As to quaternary structure, the basal body constitutes a major portion of the flagellar organelle and consists of four rings (L,P,S, and M) mounted on a central rod.

The protein localises to the cell outer membrane. It is found in the bacterial flagellum basal body. Functionally, assembles around the rod to form the L-ring and probably protects the motor/basal body from shearing forces during rotation. The polypeptide is Flagellar L-ring protein (Nitratidesulfovibrio vulgaris (strain DSM 19637 / Miyazaki F) (Desulfovibrio vulgaris)).